A 220-amino-acid chain; its full sequence is LHFPL tetraspan subfamily member 1 protein (220 aa).

Positions 1 to 20 (MRSSLTMVGTLWAFLSLVTA) are cleaved as a signal peptide. Transmembrane regions (helical) follow at residues 86 to 106 (VVTG…VLGC) and 122 to 142 (AAQF…PLGW). N153 carries an N-linked (GlcNAc...) asparagine glycan. Residues 165–185 (LGWAYYCAGGGAAAAMLICTW) form a helical membrane-spanning segment.

This sequence belongs to the LHFP family. In terms of tissue distribution, widely expressed. Expressed at high levels in lung, thymus, skeletal muscle, colon and ovary.

Its subcellular location is the membrane. This is LHFPL tetraspan subfamily member 1 protein from Homo sapiens (Human).